The following is a 287-amino-acid chain: Ribonuclease Z (287 aa).

Zn(2+) is bound by residues His64, His66, Asp68, His69, His124, Asp191, and His250. Catalysis depends on Asp68, which acts as the Proton acceptor.

It belongs to the RNase Z family. Homodimer. It depends on Zn(2+) as a cofactor.

The enzyme catalyses Endonucleolytic cleavage of RNA, removing extra 3' nucleotides from tRNA precursor, generating 3' termini of tRNAs. A 3'-hydroxy group is left at the tRNA terminus and a 5'-phosphoryl group is left at the trailer molecule.. Its function is as follows. Zinc phosphodiesterase, which displays some tRNA 3'-processing endonuclease activity. Probably involved in tRNA maturation, by removing a 3'-trailer from precursor tRNA. The protein is Ribonuclease Z of Pyrobaculum islandicum (strain DSM 4184 / JCM 9189 / GEO3).